The chain runs to 233 residues: LexA repressor (233 aa).

The H-T-H motif DNA-binding region spans 26–46; the sequence is FDEMKDALDLRSKSGIHRLIT. Catalysis depends on for autocatalytic cleavage activity residues Ser-154 and Lys-192.

It belongs to the peptidase S24 family. Homodimer.

It carries out the reaction Hydrolysis of Ala-|-Gly bond in repressor LexA.. In terms of biological role, represses a number of genes involved in the response to DNA damage (SOS response), including recA and lexA. In the presence of single-stranded DNA, RecA interacts with LexA causing an autocatalytic cleavage which disrupts the DNA-binding part of LexA, leading to derepression of the SOS regulon and eventually DNA repair. The protein is LexA repressor of Nitrobacter winogradskyi (strain ATCC 25391 / DSM 10237 / CIP 104748 / NCIMB 11846 / Nb-255).